We begin with the raw amino-acid sequence, 291 residues long: Verruculogen synthase (291 aa).

The protein belongs to the PhyH family. Homodimer. The cofactor is Fe cation.

The catalysed reaction is fumitremorgin B + 2-oxoglutarate + AH2 + 2 O2 = verruculogen + succinate + A + CO2 + H2O. Its pathway is mycotoxin biosynthesis. Its function is as follows. Verruculogen synthase; part of the gene cluster that mediates the biosynthesis of fumitremorgins, indole alkaloids that carry not only intriguing chemical structures, but also interesting biological and pharmacological activities. The biosynthesis of fumitremorgin-type alkaloids begins by condensation of the two amino acids L-tryptophan and L-proline to brevianamide F, catalyzed by the non-ribosomal peptide synthetase ftmPS/ftmA. Brevianamide F is then prenylated by the prenyltransferase ftmPT1/ftmB in the presence of dimethylallyl diphosphate, resulting in the formation of tryprostatin B. The three cytochrome P450 monooxygenases, ftmP450-1/ftmC, ftmP450-2/ftmE and ftmP450-3/FtmG, are responsible for the conversion of tryprostatin B to 6-hydroxytryprostatin B, tryprostatin A to fumitremorgin C and fumitremorgin C to 12,13-dihydroxyfumitremorgin C, respectively. The putative methyltransferase ftmMT/ftmD is expected for the conversion of 6-hydroxytryprostatin B to tryprostatin A. FtmPT2/FtmH catalyzes the prenylation of 12,13-dihydroxyfumitre-morgin C in the presence of dimethylallyl diphosphate, resulting in the formation of fumitremorgin B. Fumitremorgin B is further converted to verruculogen by ftmOx1/ftmF via the insertion of an endoperoxide bond between the two prenyl moieties. Finally, verruculogen is further converted to fumitremorgin A by the verruculogen prenyltransferase ftmPT3. This Neosartorya fischeri (strain ATCC 1020 / DSM 3700 / CBS 544.65 / FGSC A1164 / JCM 1740 / NRRL 181 / WB 181) (Aspergillus fischerianus) protein is Verruculogen synthase.